A 744-amino-acid chain; its full sequence is Glucosamine inositolphosphorylceramide transferase 1 (744 aa).

A run of 3 helical transmembrane segments spans residues 31–51 (FLVA…WLVV), 378–398 (SLFG…VGFV), and 460–480 (LFFC…VHFL). Substrate-binding positions include asparagine 534, 558 to 563 (NSLNNR), 579 to 581 (DDD), arginine 609, and 665 to 669 (FNCED). Mn(2+) is bound at residue aspartate 581. A disulfide bond links cysteine 667 and cysteine 718. Aspartate 669 is an active-site residue.

It belongs to the glycosyltransferase 64 family. It depends on Mn(2+) as a cofactor. As to expression, highly expressed in almost all tissues.

The protein resides in the membrane. Its pathway is sphingolipid metabolism. Essential protein. Glycosyltransferase that mediates the glycosylation of glycosylinositol phosphorylceramides (GIPCs), the major sphingolipids in the plasma membrane; acts as a HexN(Ac)-specific GIPC sugar transferase. Responsible for the glycosylation of a subgroup of GIPCs found in seeds and pollen that contain GlcNAc and GlcN (GlcN(Ac)). Maybe involved in the maintenance of cell-cell adhesion. This chain is Glucosamine inositolphosphorylceramide transferase 1, found in Oryza sativa subsp. japonica (Rice).